A 172-amino-acid polypeptide reads, in one-letter code: Counting factor-associated protein B (172 aa).

The first 21 residues, 1–21 (MKLLNSLILLVLTCLVSSINT), serve as a signal peptide directing secretion. Residues Asn-37 and Asn-153 are each glycosylated (N-linked (GlcNAc...) asparagine).

It is found in the secreted. This is Counting factor-associated protein B (cfaB) from Dictyostelium discoideum (Social amoeba).